Here is a 215-residue protein sequence, read N- to C-terminus: MSKQADSLGFEQDAKPENVVWHRHAVDKAQRATLKQQRPAVLWFTGLSGAGKSTVAGALENRLAALGYHTYLLDGDNVRHGLCSDLGFSEQDRRENIRRIGELAKLMSDAGLIVLTAFISPHRAERQMVRDLLPNGEFLEVYVNTSLDVCEARDPKGLYKKARAGEIRQFTGIDSAYEAPLNPDIDLPAGEKSVDELVAQCLQALAERHIIQRWV.

46 to 53 (GLSGAGKS) contributes to the ATP binding site. Ser-120 serves as the catalytic Phosphoserine intermediate.

This sequence belongs to the APS kinase family.

The catalysed reaction is adenosine 5'-phosphosulfate + ATP = 3'-phosphoadenylyl sulfate + ADP + H(+). It participates in sulfur metabolism; hydrogen sulfide biosynthesis; sulfite from sulfate: step 2/3. In terms of biological role, catalyzes the synthesis of activated sulfate. The chain is Adenylyl-sulfate kinase (cysC) from Vibrio cholerae serotype O1 (strain ATCC 39315 / El Tor Inaba N16961).